Reading from the N-terminus, the 220-residue chain is DNA replication complex GINS protein SLD5 (220 aa).

This sequence belongs to the GINS4/SLD5 family. In terms of assembly, component of the GINS complex. Interacts with EOL1 in the nucleus.

The protein resides in the nucleus. In terms of biological role, the GINS complex plays an essential role in the initiation of DNA replication. Required during embryogenesis. The polypeptide is DNA replication complex GINS protein SLD5 (Arabidopsis thaliana (Mouse-ear cress)).